Here is a 243-residue protein sequence, read N- to C-terminus: Interleukin-27 subunit alpha (243 aa).

The first 28 residues, 1-28, serve as a signal peptide directing secretion; that stretch reads MGQTAGDLGWRLSLLLLPLLLVQAGVWG.

The protein belongs to the IL-6 superfamily. In terms of assembly, heterodimer with EBI3; not disulfide-linked. This heterodimer is known as interleukin IL-27. Post-translationally, O-glycosylated. As to expression, expressed in monocytes and in placenta.

It localises to the secreted. In terms of biological role, associates with EBI3 to form the IL-27 interleukin, a heterodimeric cytokine which functions in innate immunity. IL-27 has pro- and anti-inflammatory properties, that can regulate T-helper cell development, suppress T-cell proliferation, stimulate cytotoxic T-cell activity, induce isotype switching in B-cells, and that has diverse effects on innate immune cells. Among its target cells are CD4 T-helper cells which can differentiate in type 1 effector cells (TH1), type 2 effector cells (TH2) and IL17 producing helper T-cells (TH17). It drives rapid clonal expansion of naive but not memory CD4 T-cells. It also strongly synergizes with IL-12 to trigger interferon-gamma/IFN-gamma production of naive CD4 T-cells, binds to the cytokine receptor WSX-1/TCCR which appears to be required but not sufficient for IL-27-mediated signal transduction. IL-27 potentiate the early phase of TH1 response and suppress TH2 and TH17 differentiation. It induces the differentiation of TH1 cells via two distinct pathways, p38 MAPK/TBX21- and ICAM1/ITGAL/ERK-dependent pathways. It also induces STAT1, STAT3, STAT4 and STAT5 phosphorylation and activates TBX21/T-Bet via STAT1 with resulting IL12RB2 up-regulation, an event crucial to TH1 cell commitment. It suppresses the expression of GATA3, the inhibitor TH1 cells development. In CD8 T-cells, it activates STATs as well as GZMB. IL-27 reveals to be a potent inhibitor of TH17 cell development and of IL-17 production. Indeed IL27 alone is also able to inhibit the production of IL17 by CD4 and CD8 T-cells. While IL-27 suppressed the development of pro-inflammatory Th17 cells via STAT1, it inhibits the development of anti-inflammatory inducible regulatory T-cells, iTreg, independently of STAT1. IL-27 also has an effect on cytokine production, it suppresses pro-inflammatory cytokine production such as IL2, IL4, IL5 and IL6 and activates suppressors of cytokine signaling such as SOCS1 and SOCS3. Apart from suppression of cytokine production, IL-27 also antagonizes the effects of some cytokines such as IL6 through direct effects on T-cells. Another important role of IL-27 is its antitumor activity as well as its antiangiogenic activity with activation of production of antiangiogenic chemokines such as IP-10/CXCL10 and MIG/CXCL9. In vein endothelial cells, it induces IRF1/interferon regulatory factor 1 and increase the expression of MHC class II transactivator/CIITA with resulting up-regulation of major histocompatibility complex class II. IL-27 also demonstrates antiviral activity with inhibitory properties on HIV-1 replication. This is Interleukin-27 subunit alpha (IL27) from Homo sapiens (Human).